We begin with the raw amino-acid sequence, 265 residues long: Mlc titration factor A (265 aa).

Residues histidine 111, histidine 148, histidine 152, and glutamate 211 each contribute to the Zn(2+) site.

This sequence belongs to the MtfA family. Interacts with Mlc. The cofactor is Zn(2+).

Its subcellular location is the cytoplasm. In terms of biological role, involved in the modulation of the activity of the glucose-phosphotransferase system (glucose-PTS). Interacts with the transcriptional repressor Mlc, preventing its interaction with DNA and leading to the modulation of expression of genes regulated by Mlc, including ptsG, which encodes the PTS system glucose-specific EIICB component. Shows zinc-dependent metallopeptidase activity. The chain is Mlc titration factor A from Salmonella choleraesuis (strain SC-B67).